The sequence spans 260 residues: MAEEYKNTVPEQETPKVATEESSAPEIKERGMFDFLKKKEEVKPQETTTLASEFEHKTQISEPESFVAKHEEEEHKPTLLEQLHQKHEEEEENKPSLLDKLHRSNSSSSSSSDEEGEDGEKKKKEKKKKIVEGDHVKTVEEENQGVMDRIKEKFPLGEKPGGDDVPVVTTMPAPHSVEDHKPEEEEKKGFMDKIKEKLPGHSKKPEDSQVVNTTPLVETATPIADIPEEKKGFMDKIKEKLPGYHAKTTGEEEKKEKVSD.

Disordered regions lie at residues 1–187 (MAEE…EEEK), 197–216 (KLPGHSKKPEDSQVVNTTPL), and 240–260 (KLPGYHAKTTGEEEKKEKVSD). An N-acetylalanine modification is found at A2. The span at 26 to 44 (EIKERGMFDFLKKKEEVKP) shows a compositional bias: basic and acidic residues. S61 is modified (phosphoserine). 5 stretches are compositionally biased toward basic and acidic residues: residues 67–102 (VAKHEEEEHKPTLLEQLHQKHEEEEENKPSLLDKLH), 130–140 (IVEGDHVKTVE), 148–162 (DRIKEKFPLGEKPGG), 176–187 (SVEDHKPEEEEK), and 197–207 (KLPGHSKKPED). 2 repeat units span residues 184-204 (EEEKKGFMDKIKEKLPGHSKK) and 227-247 (PEEKKGFMDKIKEKLPGYHAK). The interval 184 to 247 (EEEKKGFMDK…KEKLPGYHAK (64 aa)) is 2 X 21 AA repeats, Lys-rich.

It belongs to the plant dehydrin family. In terms of tissue distribution, in stems, cauline leaves, roots and flowers. Low levels found in maturing seeds. Absent in dry seeds.

In Arabidopsis thaliana (Mouse-ear cress), this protein is Dehydrin ERD10 (ERD10).